A 198-amino-acid polypeptide reads, in one-letter code: Imidazoleglycerol-phosphate dehydratase (198 aa).

Belongs to the imidazoleglycerol-phosphate dehydratase family.

Its subcellular location is the cytoplasm. It carries out the reaction D-erythro-1-(imidazol-4-yl)glycerol 3-phosphate = 3-(imidazol-4-yl)-2-oxopropyl phosphate + H2O. The protein operates within amino-acid biosynthesis; L-histidine biosynthesis; L-histidine from 5-phospho-alpha-D-ribose 1-diphosphate: step 6/9. The chain is Imidazoleglycerol-phosphate dehydratase from Janthinobacterium sp. (strain Marseille) (Minibacterium massiliensis).